Reading from the N-terminus, the 430-residue chain is Adenylosuccinate synthetase (430 aa).

Residues 12-18 (GDEGKGK) and 40-42 (GHT) contribute to the GTP site. Residue aspartate 13 is the Proton acceptor of the active site. Mg(2+) is bound by residues aspartate 13 and glycine 40. Residues 13-16 (DEGK), 38-41 (NAGH), threonine 130, arginine 144, glutamine 224, threonine 239, and arginine 303 each bind IMP. Catalysis depends on histidine 41, which acts as the Proton donor. Substrate is bound at residue 299-305 (TVTGRKR). GTP-binding positions include arginine 305, 331 to 333 (KLD), and 413 to 415 (STS).

Belongs to the adenylosuccinate synthetase family. In terms of assembly, homodimer. Mg(2+) serves as cofactor.

The protein resides in the cytoplasm. It catalyses the reaction IMP + L-aspartate + GTP = N(6)-(1,2-dicarboxyethyl)-AMP + GDP + phosphate + 2 H(+). Its pathway is purine metabolism; AMP biosynthesis via de novo pathway; AMP from IMP: step 1/2. Functionally, plays an important role in the de novo pathway of purine nucleotide biosynthesis. Catalyzes the first committed step in the biosynthesis of AMP from IMP. In Parvibaculum lavamentivorans (strain DS-1 / DSM 13023 / NCIMB 13966), this protein is Adenylosuccinate synthetase.